The chain runs to 104 residues: Naphthalene 1,2-dioxygenase system, ferredoxin component (104 aa).

Residues 6 to 101 (IDAVALYEIP…VKIEGQRVMI (96 aa)) enclose the Rieske domain. Positions 45, 47, 64, and 67 each coordinate [2Fe-2S] cluster.

It belongs to the bacterial ring-hydroxylating dioxygenase ferredoxin component family. In terms of assembly, the naphthalene dioxygenase (NDO) multicomponent enzyme system is composed of an electron transfer component and a dioxygenase component (iron sulfur protein (ISP)). The electron transfer component is composed of a ferredoxin reductase (NdoR) and a ferredoxin (NdoA), and the dioxygenase component is formed of a heterohexamer (trimer of heterodimers) of three large alpha subunits (NdoB) and three small beta subunits (NdoC). [2Fe-2S] cluster serves as cofactor.

It functions in the pathway aromatic compound metabolism; naphthalene degradation. In terms of biological role, component of the naphthalene dioxygenase (NDO) multicomponent enzyme system which catalyzes the incorporation of both atoms of molecular oxygen into naphthalene to form cis-(1R,2S)-dihydroxy-1,2-dihydronaphthalene. Functions as an intermediate electron transfer protein via a specific interaction with iron sulfur protein components (ISP) (NdoB and NdoC). This chain is Naphthalene 1,2-dioxygenase system, ferredoxin component, found in Pseudomonas aeruginosa.